Consider the following 290-residue polypeptide: 33 kDa chaperonin (290 aa).

Cystine bridges form between C235-C237 and C268-C271.

This sequence belongs to the HSP33 family. In terms of processing, under oxidizing conditions two disulfide bonds are formed involving the reactive cysteines. Under reducing conditions zinc is bound to the reactive cysteines and the protein is inactive.

It localises to the cytoplasm. Its function is as follows. Redox regulated molecular chaperone. Protects both thermally unfolding and oxidatively damaged proteins from irreversible aggregation. Plays an important role in the bacterial defense system toward oxidative stress. The sequence is that of 33 kDa chaperonin from Streptococcus pyogenes serotype M28 (strain MGAS6180).